The sequence spans 152 residues: Calmodulin (152 aa).

A2 is subject to N-acetylalanine. EF-hand domains lie at 10–45 (EQIA…LGQN), 46–81 (PTEA…KMQD), 83–118 (DTEE…LGEK), and 119–152 (LTNE…IVRN). 20 residues coordinate Ca(2+): D23, D25, D27, S29, E34, D59, D61, N63, N65, E70, D96, D98, N100, Y102, E107, D132, D134, D136, Q138, and E143.

It belongs to the calmodulin family. As to quaternary structure, interacts with cmbB, numA/nucleomorphin, pgkA/phosphoglycerate kinase, and thyB/thymidine kinase in the presence of Ca(2+). Interacts with dwwA in the absence of Ca(2+). Post-translationally, the N-terminus is blocked. Trimethylation of Lys-118 observed in other calmodulins is absent here.

The protein resides in the contractile vacuole. Calmodulin mediates the control of a large number of enzymes, ion channels and other proteins by Ca(2+). Among the enzymes to be stimulated by the calmodulin-Ca(2+) complex are a number of protein kinases and phosphatases. This chain is Calmodulin (calA), found in Dictyostelium discoideum (Social amoeba).